The following is a 446-amino-acid chain: Phosphoglucosamine mutase (446 aa).

S103 serves as the catalytic Phosphoserine intermediate. Mg(2+) contacts are provided by S103, D242, D244, and D246. Position 103 is a phosphoserine (S103).

The protein belongs to the phosphohexose mutase family. Requires Mg(2+) as cofactor. Activated by phosphorylation.

It catalyses the reaction alpha-D-glucosamine 1-phosphate = D-glucosamine 6-phosphate. In terms of biological role, catalyzes the conversion of glucosamine-6-phosphate to glucosamine-1-phosphate. The protein is Phosphoglucosamine mutase of Vibrio campbellii (strain ATCC BAA-1116).